A 91-amino-acid chain; its full sequence is MARVTVQEAADKIGNRFDLILTAARRARQLQLHAREPLVPEENDKPTVIALREIEKGLINGQIMDQLENNDAIQQEVAEQEAISFLADVQG.

The protein belongs to the RNA polymerase subunit omega family. In terms of assembly, the RNAP catalytic core consists of 2 alpha, 1 beta, 1 beta' and 1 omega subunit. When a sigma factor is associated with the core the holoenzyme is formed, which can initiate transcription.

The enzyme catalyses RNA(n) + a ribonucleoside 5'-triphosphate = RNA(n+1) + diphosphate. In terms of biological role, promotes RNA polymerase assembly. Latches the N- and C-terminal regions of the beta' subunit thereby facilitating its interaction with the beta and alpha subunits. This chain is DNA-directed RNA polymerase subunit omega, found in Actinobacillus pleuropneumoniae serotype 5b (strain L20).